Here is a 241-residue protein sequence, read N- to C-terminus: Ribonuclease 3 (241 aa).

In terms of domain architecture, RNase III spans 8-137; it reads LTLLKNRLGI…LLGAVYLDQG (130 aa). E50 is a Mg(2+) binding site. D54 is an active-site residue. Residues D123 and E126 each contribute to the Mg(2+) site. E126 is an active-site residue. The region spanning 164–233 is the DRBM domain; it reads DYKTELQELV…AKKALMKSDL (70 aa). The tract at residues 214-241 is disordered; that stretch reads RSKKEAEQQAAKKALMKSDLGSACNHKK.

This sequence belongs to the ribonuclease III family. As to quaternary structure, homodimer. Mg(2+) is required as a cofactor.

The protein localises to the cytoplasm. It carries out the reaction Endonucleolytic cleavage to 5'-phosphomonoester.. In terms of biological role, digests double-stranded RNA. Involved in the processing of primary rRNA transcript to yield the immediate precursors to the large and small rRNAs (23S and 16S). Processes some mRNAs, and tRNAs when they are encoded in the rRNA operon. Processes pre-crRNA and tracrRNA of type II CRISPR loci if present in the organism. In Pelotomaculum thermopropionicum (strain DSM 13744 / JCM 10971 / SI), this protein is Ribonuclease 3.